The sequence spans 517 residues: Zinc finger protein 215 (517 aa).

An SCAN box domain is found at 48–126 (RQKFRHFQYL…EDMVTLIEDV (79 aa)). The region spanning 164–237 (VTFKDVVVEF…EKEIPRKTIF (74 aa)) is the KRAB domain. C2H2-type zinc fingers lie at residues 379–401 (YECY…QIIH), 407–429 (YKCS…QKLH), 462–484 (YECV…QMIH), and 490–512 (FKCK…QKLH).

It belongs to the krueppel C2H2-type zinc-finger protein family.

It is found in the nucleus. May be involved in transcriptional regulation. The chain is Zinc finger protein 215 (ZNF215) from Pongo abelii (Sumatran orangutan).